The chain runs to 365 residues: MSHNSFGHLFRVTTWGESHGPSLGCVVDGCPPGIRFTLAEVQHWMDKRKPGQSRFVTQRREDDIVKVLSGVMLDEDGETMTTTGTPISMLIENTDQRSKDYGEIARRFRPGHADFTYDLKYGIRDYRGGGRSSARETAARVAAGAIARKVVPSLNVRGALVQIGKHKINRDNWDWDQVDQNPFFCPDPEMVPVWEEYLDGIRKSGSSIGAVVEVVAEGVPAGIGAPIYAKLDQDIASSLMSINAVKGVEIGEGFASAELSGEENADQMRMGNDGKPIFLSNHAGGILGGIATGEPVIARFAIKPTSSILTERLSIDTDGNNVDVRTKGRHDPCVGIRAVPIGEAMIACTVADHYLRDRGQTGRLK.

NADP(+) contacts are provided by Arg48 and Arg54. FMN is bound by residues 131–133 (RSS), 243–244 (NA), Gly288, 303–307 (KPTSS), and Arg329.

Belongs to the chorismate synthase family. In terms of assembly, homotetramer. Requires FMNH2 as cofactor.

The catalysed reaction is 5-O-(1-carboxyvinyl)-3-phosphoshikimate = chorismate + phosphate. Its pathway is metabolic intermediate biosynthesis; chorismate biosynthesis; chorismate from D-erythrose 4-phosphate and phosphoenolpyruvate: step 7/7. Functionally, catalyzes the anti-1,4-elimination of the C-3 phosphate and the C-6 proR hydrogen from 5-enolpyruvylshikimate-3-phosphate (EPSP) to yield chorismate, which is the branch point compound that serves as the starting substrate for the three terminal pathways of aromatic amino acid biosynthesis. This reaction introduces a second double bond into the aromatic ring system. The chain is Chorismate synthase from Agrobacterium fabrum (strain C58 / ATCC 33970) (Agrobacterium tumefaciens (strain C58)).